The primary structure comprises 349 residues: tRNA pseudouridine synthase D (349 aa).

A substrate-binding site is contributed by F27. Residue D80 is the Nucleophile of the active site. Position 129 (N129) interacts with substrate. Residues G155–L303 enclose the TRUD domain. F329 serves as a coordination point for substrate.

It belongs to the pseudouridine synthase TruD family.

It carries out the reaction uridine(13) in tRNA = pseudouridine(13) in tRNA. Responsible for synthesis of pseudouridine from uracil-13 in transfer RNAs. This is tRNA pseudouridine synthase D from Salmonella typhi.